Here is a 554-residue protein sequence, read N- to C-terminus: Afadin- and alpha-actinin-binding protein A (554 aa).

Coiled coils occupy residues 122-287 and 359-449; these read LEYL…SQRK and ENGL…AIRL. Residues 508-528 form a disordered region; that stretch reads LASSGDYSRRPSKALPITSSS.

Belongs to the ADIP family. In terms of assembly, interacts with WRAP73.

Its subcellular location is the cell junction. It is found in the adherens junction. The protein localises to the cytoplasm. It localises to the cytoskeleton. The protein resides in the microtubule organizing center. Its subcellular location is the centrosome. It is found in the centriolar satellite. Belongs to an adhesion system, which plays a role in the organization of homotypic, interneuronal and heterotypic cell-cell adherens junctions (AJs). Involved in cell movement. Acts as a centrosome maturation factor, probably by maintaining the integrity of the pericentriolar material and proper microtubule nucleation at mitotic spindle poles. The function seems to implicate at least in part WRAP73; the SSX2IP:WRAP73 complex is proposed to act as regulator of spindle anchoring at the mitotic centrosome. This chain is Afadin- and alpha-actinin-binding protein A (ssx2ip-a), found in Xenopus laevis (African clawed frog).